The chain runs to 311 residues: MGYLNSVLSSSSQVHSDDGPVSGGGLSQNGKFSYGYASSPGKRSSMEDFYETRIDGVEGEIVGLFGVFDGHGGARAAEYVKQNLFSNLIRHPKFISDTTAAIADAYNQTDSEFLKSENSQNRDAGSTASTAILVGDRLLVANVGDSRAVICRGGNAIAVSRDHKPDQSDERQRIEDAGGFVMWAGTWRVGGVLAVSRAFGDRLLKQYVVADPEIQEEKVDSSLEFLILASDGLWDVVSNEEAVGMIKAIEDPEEGAKRLMMEAYQRGSADNITCVVVRFFSDQAGGIGSSSTNIPIDHGIVPDRISGDSST.

Low complexity predominate over residues 1–14 (MGYLNSVLSSSSQV). The disordered stretch occupies residues 1–26 (MGYLNSVLSSSSQVHSDDGPVSGGGL). One can recognise a PPM-type phosphatase domain in the interval 33–279 (SYGYASSPGK…DNITCVVVRF (247 aa)). 4 residues coordinate Mn(2+): Asp-69, Gly-70, Asp-231, and Asp-270.

The protein belongs to the PP2C family. In terms of assembly, interacts with the Pseudomonas syringae pv. maculicola effector HopW1-1 (via C-terminus). It depends on Mg(2+) as a cofactor. Mn(2+) serves as cofactor.

It catalyses the reaction O-phospho-L-seryl-[protein] + H2O = L-seryl-[protein] + phosphate. The enzyme catalyses O-phospho-L-threonyl-[protein] + H2O = L-threonyl-[protein] + phosphate. Its activity is regulated as follows. Inhibited by sodium fluoride (NaF). In terms of biological role, protein phosphatase that modulates defense response to pathogenic bacteria, conferring resistance and promoting salicylic acid (SA) accumulation. This chain is Probable protein phosphatase 2C 59 (WIN2), found in Arabidopsis thaliana (Mouse-ear cress).